Reading from the N-terminus, the 165-residue chain is Phosphopantetheine adenylyltransferase (165 aa).

Threonine 11 is a substrate binding site. Residues 11–12 and histidine 19 each bind ATP; that span reads TF. Residues lysine 43, threonine 79, and arginine 93 each coordinate substrate. Residues glutamate 104 and 128–134 contribute to the ATP site; that span reads LEPLNST.

Belongs to the bacterial CoaD family. Homohexamer. Mg(2+) serves as cofactor.

It is found in the cytoplasm. It carries out the reaction (R)-4'-phosphopantetheine + ATP + H(+) = 3'-dephospho-CoA + diphosphate. It functions in the pathway cofactor biosynthesis; coenzyme A biosynthesis; CoA from (R)-pantothenate: step 4/5. Functionally, reversibly transfers an adenylyl group from ATP to 4'-phosphopantetheine, yielding dephospho-CoA (dPCoA) and pyrophosphate. The chain is Phosphopantetheine adenylyltransferase from Lactococcus lactis subsp. lactis (strain IL1403) (Streptococcus lactis).